The sequence spans 498 residues: Protein flp (498 aa).

4 helical membrane passes run 6 to 26, 389 to 409, 433 to 453, and 471 to 491; these read LYFLSISIIILVAISIAIHIT, FNIVTVLMTTLILLAFIFSAY, LTLCLCIAIALILYALPYLIL, and LALITTLIALFSTLIVILLFL.

Its subcellular location is the cell membrane. In terms of biological role, its precise function is unknown. Has no penicillin-binding activity and is not involved in methicillin resistance. This chain is Protein flp (flp), found in Staphylococcus aureus (strain MW2).